Here is a 152-residue protein sequence, read N- to C-terminus: Deoxyuridine 5'-triphosphate nucleotidohydrolase (152 aa).

Substrate is bound by residues 71 to 73 (RSG), Asn84, 88 to 90 (LID), and Met98.

This sequence belongs to the dUTPase family. It depends on Mg(2+) as a cofactor.

The enzyme catalyses dUTP + H2O = dUMP + diphosphate + H(+). It participates in pyrimidine metabolism; dUMP biosynthesis; dUMP from dCTP (dUTP route): step 2/2. Its function is as follows. This enzyme is involved in nucleotide metabolism: it produces dUMP, the immediate precursor of thymidine nucleotides and it decreases the intracellular concentration of dUTP so that uracil cannot be incorporated into DNA. The chain is Deoxyuridine 5'-triphosphate nucleotidohydrolase from Shewanella baltica (strain OS155 / ATCC BAA-1091).